Consider the following 339-residue polypeptide: DNA-directed RNA polymerase subunit alpha (339 aa).

Residues 1-233 form an alpha N-terminal domain (alpha-NTD) region; sequence MVREEVAGST…DLFLPFLHAE (233 aa). The alpha C-terminal domain (alpha-CTD) stretch occupies residues 266 to 339; sequence GIPLNCIFID…IDLLKNKLSF (74 aa).

Belongs to the RNA polymerase alpha chain family. In terms of assembly, in plastids the minimal PEP RNA polymerase catalytic core is composed of four subunits: alpha, beta, beta', and beta''. When a (nuclear-encoded) sigma factor is associated with the core the holoenzyme is formed, which can initiate transcription.

The protein localises to the plastid. It localises to the chloroplast. The catalysed reaction is RNA(n) + a ribonucleoside 5'-triphosphate = RNA(n+1) + diphosphate. DNA-dependent RNA polymerase catalyzes the transcription of DNA into RNA using the four ribonucleoside triphosphates as substrates. The protein is DNA-directed RNA polymerase subunit alpha of Psathyrostachys juncea (Russian wildrye).